The following is a 199-amino-acid chain: Large ribosomal subunit protein uL18 (199 aa).

It belongs to the universal ribosomal protein uL18 family. As to quaternary structure, part of the 50S ribosomal subunit. Contacts the 5S and 23S rRNAs.

Its function is as follows. This is one of the proteins that bind and probably mediate the attachment of the 5S RNA into the large ribosomal subunit, where it forms part of the central protuberance. The chain is Large ribosomal subunit protein uL18 from Saccharolobus solfataricus (strain ATCC 35092 / DSM 1617 / JCM 11322 / P2) (Sulfolobus solfataricus).